The chain runs to 342 residues: Tetraacyldisaccharide 4'-kinase (342 aa).

68–75 serves as a coordination point for ATP; the sequence is TVGGTGKT.

It belongs to the LpxK family.

The catalysed reaction is a lipid A disaccharide + ATP = a lipid IVA + ADP + H(+). It functions in the pathway glycolipid biosynthesis; lipid IV(A) biosynthesis; lipid IV(A) from (3R)-3-hydroxytetradecanoyl-[acyl-carrier-protein] and UDP-N-acetyl-alpha-D-glucosamine: step 6/6. Its function is as follows. Transfers the gamma-phosphate of ATP to the 4'-position of a tetraacyldisaccharide 1-phosphate intermediate (termed DS-1-P) to form tetraacyldisaccharide 1,4'-bis-phosphate (lipid IVA). The protein is Tetraacyldisaccharide 4'-kinase of Burkholderia pseudomallei (strain K96243).